The following is a 680-amino-acid chain: Zinc finger protein 334 (680 aa).

In terms of domain architecture, KRAB spans 10 to 81 (VSFQDLTVNF…EEFSNQNYPD (72 aa)). 14 consecutive C2H2-type zinc fingers follow at residues 237–259 (NECN…QRIH), 265–287 (YVCS…RRIH), 293–315 (YECS…QKIH), 321–343 (YECN…FRSH), 349–371 (YECK…QRTH), 377–399 (NECK…QRIH), 405–427 (YECS…RRSH), 433–455 (YECS…QITH), 461–483 (YECN…QRTH), 544–566 (YECN…QRTH), 572–594 (YECN…QRTH), 600–622 (YECN…RRIH), 628–650 (YECN…QKIH), and 656–678 (YECN…QKSH).

It belongs to the krueppel C2H2-type zinc-finger protein family.

The protein resides in the nucleus. Functionally, may be involved in transcriptional regulation. The polypeptide is Zinc finger protein 334 (ZNF334) (Homo sapiens (Human)).